Reading from the N-terminus, the 295-residue chain is MTENIRQIAFYGKGGIGKSTTSQNTLAAMAEMGQRIMIVGCDPKADSTRLMLHSKAQTTVLHLAAERGAVEDLELEEVMLTGFRGVKCVESGGPEPGVGCAGRGIITAINFLEENGAYQDLDFVSYDVLGDVVCGGFAMPIREGKAQEIYIVTSGEMMAMYAANNIARGILKYAHSGGVRLGGLICNSRKVDREAELIENLAERLNTQMIHFVPRDNIVQHAELRRMTVNEYAPDSNQSQEYRALAKKIINNTKLTIPTPMEMDELEALLIEYGILDDDTKHADIIGKPAEASAK.

12-19 is a binding site for ATP; the sequence is GKGGIGKS. Cys100 serves as a coordination point for [4Fe-4S] cluster. Arg103 carries the post-translational modification ADP-ribosylarginine; by dinitrogenase reductase ADP-ribosyltransferase. Cys134 serves as a coordination point for [4Fe-4S] cluster.

It belongs to the NifH/BchL/ChlL family. As to quaternary structure, homodimer. [4Fe-4S] cluster serves as cofactor. The reversible ADP-ribosylation of Arg-103 inactivates the nitrogenase reductase and regulates nitrogenase activity.

It carries out the reaction N2 + 8 reduced [2Fe-2S]-[ferredoxin] + 16 ATP + 16 H2O = H2 + 8 oxidized [2Fe-2S]-[ferredoxin] + 2 NH4(+) + 16 ADP + 16 phosphate + 6 H(+). Functionally, the key enzymatic reactions in nitrogen fixation are catalyzed by the nitrogenase complex, which has 2 components: the iron protein and the molybdenum-iron protein. The sequence is that of Nitrogenase iron protein 1 (nifH1) from Mastigocladus laminosus (Fischerella sp.).